The sequence spans 1429 residues: MASIPEERSAEHRARSYQLEMFEASLKGNIIVVMGTGSGKTQIALLRIIHELENSDGKLIWFLAPTVPLCLQQHRVISQHIPAVKSRTLLGSDKVELWTEQAVWDAVLEGLQVIVSTPAVLHDAMTHGFVRISRLGLLIFDEAHHCIRKHPTNMIMRNFYHPALQEYGPGAVPRILGLTASAGSSREGLQTIEMNLNSVCTTPQAHRQELLEYTHMPELRRVLYTPLMKENASLWEGSTLQKLLERDNTYCSGQMKTFVCKAVHIFQELGIWAAEYFIRASVEELLSHAYVHSKIDLDYDEREYLVNILSKSPVPDIDVHSTDPKDFPVSPKFEALISFLMSTEDINFSGLIFVEQRAAVTVMSYLLSTHPSTRDRFRTGSFIGMSNSTNRKTMLGDLLSAKMQPDTLDDFRYGRKNLIVATDVLKEGIDVSACSVVICYNIPKGFESFIQRRGRARRQNSTYSMMLSTEDDGSTLDKWQKFEKIMEEACLEDRRRTEELRALGSLDEDVCTRFCVRSTGAILTAEYAMQHLVHFCDTLPRQNYVEDKPEFSFERNDGGLLRAKVILPSSVNPKVRRAEGKAWWKTERAAKKEAAFYAYKALYEHGLVNDNLLPLTKSREFTRKDISLLPAVQKVSEQYDPWVDWAHLWSSTNLYQNRILVRQNEEDTSMKFITPTATPPIAPMKLCWDSETTYTLEFEAAGAVSLTAENIERMRAATSLYLQATTSTPLAGNKDYIALFGPDLPWDELETWLKKNQGHEPAIQVFSSQRPLDRMGVVRDRSRYGELLIFKRWLNRSGDLELECDPYPSKRRNLLQRQTLAKKRPAEDEILGSPTKKRILSASHCTIDRLPASETVFGRFIPVILDRLEAALVATRLCETVLRDIQFQDLRHVITAITMPLAQAPTDYQRYEFFGDSVLKFTVAASLFYNNPNWHEGYLTETLHALVQNARLTRAALDQGLDAYIISNRFTPRKWSAPLISEKLYASASTRSMSAKVLADVVEALIGAAYIDGGLHKAQSCIVRFLPEIELPETKLPRPESMPMSKDHKKPHLIQQENLENHIGYTFKDKTLLMEALTHPSCPYDTSIQSYQRLEFLGDAVLDMLIVDLIRAHHVECQQGEMTKIKHAIVNGHLLAFLCMQFKWAMPSPLTPSIDTGTETETEIISPPPKTLSLYSYLRYSPSRPLPLHVEPESGSSNALTRHNLLCPSILHALNNTTAYPWSLFSAIHADKFFSDVVESIIGAIFVDSGGDLGACAGFIERLGLVRIAKRILDERVDVTHPTQRAQIELQKLAARLGCNDGFRFECRTVRDLSSGKRKTLEVDINDHYGDEDPAVLGAEGPELTYTCTISLATLRTNQDFGRDLDDIVVTGCLSKEDAEIQAANLVIELVGRLESGRLYKKNMDLDIDTGVQVDLDLDMNLDPGITTG.

In terms of domain architecture, Helicase ATP-binding spans 21–200 (MFEASLKGNI…TIEMNLNSVC (180 aa)). Residue 34–41 (MGTGSGKT) coordinates ATP. The short motif at 141 to 144 (DEAH) is the DEAH box element. One can recognise a Helicase C-terminal domain in the interval 335–501 (ALISFLMSTE…EDRRRTEELR (167 aa)). A Dicer dsRNA-binding fold domain is found at 528–622 (AMQHLVHFCD…LPLTKSREFT (95 aa)). 2 RNase III domains span residues 874–1014 (ATRL…IDGG) and 1056–1250 (QENL…VDSG). Positions 1095, 1236, and 1239 each coordinate Mg(2+).

Belongs to the helicase family. Dicer subfamily. The cofactor is Mg(2+). It depends on Mn(2+) as a cofactor.

Dicer-like endonuclease involved in cleaving double-stranded RNA in the RNA interference (RNAi) pathway. Produces 21 to 25 bp dsRNAs (siRNAs) which target the selective destruction of homologous RNAs leading to sequence-specific suppression of gene expression, called post-transcriptional gene silencing (PTGS). Part of a broad host defense response against viral infection and transposons. The chain is Dicer-like protein 2 (dcl2) from Emericella nidulans (strain FGSC A4 / ATCC 38163 / CBS 112.46 / NRRL 194 / M139) (Aspergillus nidulans).